A 74-amino-acid polypeptide reads, in one-letter code: Protein krueppel (74 aa).

4 consecutive C2H2-type zinc fingers follow at residues 1–4 (ERTH), 10–32 (FECQ…MRLH), 38–60 (YRCE…LRVH), and 66–74 (YGCEHCSMK).

The protein belongs to the krueppel C2H2-type zinc-finger protein family.

The protein localises to the nucleus. Krueppel is a gap class segmentation protein. The sequence is that of Protein krueppel (Kr) from Tribolium castaneum (Red flour beetle).